Here is a 491-residue protein sequence, read N- to C-terminus: ADP-specific phosphofructokinase (491 aa).

An ADPK domain is found at 4–486 (EEWEQRHAEA…FVAMLAKIKQ (483 aa)). Residues glutamate 281, glutamate 312, and aspartate 470 each coordinate Mg(2+). Aspartate 470 (proton acceptor) is an active-site residue.

Belongs to the carbohydrate kinase PfkC family. The cofactor is Mg(2+).

It localises to the cytoplasm. The enzyme catalyses beta-D-fructose 6-phosphate + ADP = beta-D-fructose 1,6-bisphosphate + AMP + H(+). It functions in the pathway carbohydrate degradation; glycolysis. Catalyzes the phosphorylation of fructose 6-phosphate to fructose 1,6-bisphosphate using ADP as the phosphate donor. The chain is ADP-specific phosphofructokinase from Methanosarcina acetivorans (strain ATCC 35395 / DSM 2834 / JCM 12185 / C2A).